A 2290-amino-acid polypeptide reads, in one-letter code: Protein Ycf2 (2290 aa).

An ATP-binding site is contributed by 1644–1651; the sequence is GSIGTGRS.

The protein belongs to the Ycf2 family.

The protein resides in the plastid. Its subcellular location is the chloroplast stroma. Its function is as follows. Probable ATPase of unknown function. Its presence in a non-photosynthetic plant (Epifagus virginiana) and experiments in tobacco indicate that it has an essential function which is probably not related to photosynthesis. The chain is Protein Ycf2 from Nasturtium officinale (Watercress).